We begin with the raw amino-acid sequence, 445 residues long: Bifunctional protein GlmU (445 aa).

A pyrophosphorylase region spans residues M1 to R218. Residues L6–G9, K20, Q69, G74–T75, Y96–D98, G134, E147, N162, and N216 contribute to the UDP-N-acetyl-alpha-D-glucosamine site. A Mg(2+)-binding site is contributed by D98. N216 contacts Mg(2+). The tract at residues K219–N239 is linker. The interval G240 to E445 is N-acetyltransferase. UDP-N-acetyl-alpha-D-glucosamine contacts are provided by R321 and K339. Catalysis depends on H351, which acts as the Proton acceptor. UDP-N-acetyl-alpha-D-glucosamine is bound by residues Y354 and N365. Residues A368, N374–Y375, S393, A411, and R428 each bind acetyl-CoA.

This sequence in the N-terminal section; belongs to the N-acetylglucosamine-1-phosphate uridyltransferase family. It in the C-terminal section; belongs to the transferase hexapeptide repeat family. Homotrimer. Mg(2+) is required as a cofactor.

The protein localises to the cytoplasm. It carries out the reaction alpha-D-glucosamine 1-phosphate + acetyl-CoA = N-acetyl-alpha-D-glucosamine 1-phosphate + CoA + H(+). The enzyme catalyses N-acetyl-alpha-D-glucosamine 1-phosphate + UTP + H(+) = UDP-N-acetyl-alpha-D-glucosamine + diphosphate. Its pathway is nucleotide-sugar biosynthesis; UDP-N-acetyl-alpha-D-glucosamine biosynthesis; N-acetyl-alpha-D-glucosamine 1-phosphate from alpha-D-glucosamine 6-phosphate (route II): step 2/2. It participates in nucleotide-sugar biosynthesis; UDP-N-acetyl-alpha-D-glucosamine biosynthesis; UDP-N-acetyl-alpha-D-glucosamine from N-acetyl-alpha-D-glucosamine 1-phosphate: step 1/1. It functions in the pathway bacterial outer membrane biogenesis; LPS lipid A biosynthesis. In terms of biological role, catalyzes the last two sequential reactions in the de novo biosynthetic pathway for UDP-N-acetylglucosamine (UDP-GlcNAc). The C-terminal domain catalyzes the transfer of acetyl group from acetyl coenzyme A to glucosamine-1-phosphate (GlcN-1-P) to produce N-acetylglucosamine-1-phosphate (GlcNAc-1-P), which is converted into UDP-GlcNAc by the transfer of uridine 5-monophosphate (from uridine 5-triphosphate), a reaction catalyzed by the N-terminal domain. The chain is Bifunctional protein GlmU from Thermotoga petrophila (strain ATCC BAA-488 / DSM 13995 / JCM 10881 / RKU-1).